A 365-amino-acid chain; its full sequence is Phospho-N-acetylmuramoyl-pentapeptide-transferase (365 aa).

A run of 10 helical transmembrane segments spans residues 19–39 (TLLILLWALALALMALLSSWA), 49–69 (LLIALGFTALVTALIGMAVVP), 92–112 (AGTPTMGGIFFVPVAVAIAVV), 116–136 (FNPDVIVVGLVTLGYMAIGWV), 156–176 (LFLQVAIAVIFCTWLFFYGPT), 183–203 (IMQFVLPLGFLFWLVATFALV), 215–235 (VDGLAAGTGAIAFVGLGLLVA), 238–258 (NPALAFFCCAMAGGCIGFVHH), 279–299 (LAAVGIMTGNLWGLLLISGIF), and 345–365 (QIVGSFYLINTLLAIVAMATA).

It belongs to the glycosyltransferase 4 family. MraY subfamily. It depends on Mg(2+) as a cofactor.

The protein resides in the cell inner membrane. It carries out the reaction UDP-N-acetyl-alpha-D-muramoyl-L-alanyl-gamma-D-glutamyl-meso-2,6-diaminopimeloyl-D-alanyl-D-alanine + di-trans,octa-cis-undecaprenyl phosphate = di-trans,octa-cis-undecaprenyl diphospho-N-acetyl-alpha-D-muramoyl-L-alanyl-D-glutamyl-meso-2,6-diaminopimeloyl-D-alanyl-D-alanine + UMP. The protein operates within cell wall biogenesis; peptidoglycan biosynthesis. In terms of biological role, catalyzes the initial step of the lipid cycle reactions in the biosynthesis of the cell wall peptidoglycan: transfers peptidoglycan precursor phospho-MurNAc-pentapeptide from UDP-MurNAc-pentapeptide onto the lipid carrier undecaprenyl phosphate, yielding undecaprenyl-pyrophosphoryl-MurNAc-pentapeptide, known as lipid I. This Synechocystis sp. (strain ATCC 27184 / PCC 6803 / Kazusa) protein is Phospho-N-acetylmuramoyl-pentapeptide-transferase.